A 273-amino-acid polypeptide reads, in one-letter code: 4-hydroxy-tetrahydrodipicolinate reductase (273 aa).

Residues Gly12–Met17 and Glu38 contribute to the NAD(+) site. Arg39 is an NADP(+) binding site. Residues Gly102–Thr104 and Ala126–Phe129 contribute to the NAD(+) site. His159 serves as the catalytic Proton donor/acceptor. His160 is a binding site for (S)-2,3,4,5-tetrahydrodipicolinate. Lys163 serves as the catalytic Proton donor. Gly169–Thr170 contributes to the (S)-2,3,4,5-tetrahydrodipicolinate binding site.

This sequence belongs to the DapB family. As to quaternary structure, homotetramer.

The protein localises to the cytoplasm. It catalyses the reaction (S)-2,3,4,5-tetrahydrodipicolinate + NAD(+) + H2O = (2S,4S)-4-hydroxy-2,3,4,5-tetrahydrodipicolinate + NADH + H(+). It carries out the reaction (S)-2,3,4,5-tetrahydrodipicolinate + NADP(+) + H2O = (2S,4S)-4-hydroxy-2,3,4,5-tetrahydrodipicolinate + NADPH + H(+). It functions in the pathway amino-acid biosynthesis; L-lysine biosynthesis via DAP pathway; (S)-tetrahydrodipicolinate from L-aspartate: step 4/4. In terms of biological role, catalyzes the conversion of 4-hydroxy-tetrahydrodipicolinate (HTPA) to tetrahydrodipicolinate. This is 4-hydroxy-tetrahydrodipicolinate reductase from Escherichia coli (strain K12 / MC4100 / BW2952).